The following is a 402-amino-acid chain: MNEFPVVLVINCGSSSIKFSVLDASDCEVLMSGIADGINSENAFLSVNGGEPAPLAHHSYEGALKAIAFELEKRNLNDSVALIGHRIAHGGSIFTESAIITDEVIDNIRRVSPLAPLHNYANLSGIESAQQLFPGVTQVAVFDTSFHQTMAPEAYLYGLPWKYYEELGVRRYGFHGTSHRYVSLRAHSLLNLAEDDSGLVVAHLGNGASICAVRNGQSVDTSMGMTPLEGLMMGTRSGDVDFGAMSWVASQTNQSLGDLERVVNKESGLLGISGLSSDLRVLEKAWHEGHERAQLAIKTFVHRIARHIAGHAASLRRLDGIIFTGGIGENSSLIRRLVMEHLAVLGVEIDTEMNNRSNSFGERIVSSENARVICAVIPTNEEKMIALDAIHLGKVNAPAEFA.

ATP-binding residues include Asn-11 and Lys-18. Residue Asn-11 participates in Mg(2+) binding. Arg-86 contacts substrate. Residue Asp-143 is the Proton donor/acceptor of the active site. Residues His-175, 203-207 (HLGNG), 278-280 (DLR), and 326-330 (GIGEN) contribute to the ATP site.

It belongs to the acetokinase family. TdcD subfamily. As to quaternary structure, homodimer. Mg(2+) serves as cofactor.

It carries out the reaction propanoate + ATP = propanoyl phosphate + ADP. Its pathway is amino-acid degradation; L-threonine degradation via propanoate pathway; propanoate from L-threonine: step 4/4. Catalyzes the conversion of propionyl phosphate and ADP to propionate and ATP. The polypeptide is Propionate kinase (Escherichia coli O157:H7).